The primary structure comprises 121 residues: uncharacterized protein (121 aa).

2 disordered regions span residues 1 to 28 (MGCA…QNGD) and 60 to 82 (QENL…VPGL). S95 and S115 each carry phosphoserine.

In terms of tissue distribution, expressed in spleen, prostate, testis and uterus.

This is an uncharacterized protein from Homo sapiens (Human).